We begin with the raw amino-acid sequence, 517 residues long: MRKEEIPDKSRTIPIDPNLPKWVCQNCHHSLTIVGVDSYAGKFFNDPPPSATQGSSIHGANSVLGSTRMDNSFVVLPRHKPPQSQGIPPRPRGASSPQPDATQSGKAMEESFVVVYKSEPVSDSGGSHNLSLEVGQNGPLHSNTSGFNATINVLTRAFDIARTQTQVEQPLCLECMRVLSDKLEKEVEDVTRDVEAYEACVQRLEGETQDVLSEADFLKEKKKIEEEERKLVAAIEETEKQNAEVNHQLKELEFKGNRFNELEDRYWQEFNNFQFQLIAHQEERDAILAKIEVSQAHLELLNKTNVLIDAFPIRNDGEFGTINNFRLGRLPAIKVEWDEINAAWGQACLLLHTMCNYFRPKFQCQVKIQPMGSYPRIVDSNNETYELFGPVNLFWSTRYDKAMTLYLMCLKDFADFANSKDQENNIPPDNCLNLPYKIEKDKVLGYSITQSFNKQESWTKALKYTLCNLKWALYWFVGNTNFQPLSATVSLPSNISAAGSLYAKRGPDSSKPSCKKT.

Positions 76–106 are disordered; the sequence is LPRHKPPQSQGIPPRPRGASSPQPDATQSGK. Residues 95–105 show a composition bias toward polar residues; the sequence is SSPQPDATQSG. Residues 172 to 266 are a coiled coil; sequence CLECMRVLSD…NRFNELEDRY (95 aa).

Belongs to the beclin family. In terms of assembly, component of a phosphatidylinositol 3-kinase (PI3K) complex composed of ATG6, SH3P2 and FREE1. Interacts with SINAT1, SINAT2, SINAT5, SINAT6, TRAF1A and TRAF1B. Interacts with TUBB8/TUB8. Component of a complex made of VPS38/USL1 and PI3K main subunits such as VPS15, ATG6/VPS30 and VPS34. Binds directly to VPS38/USL1. In terms of processing, ubiquitinated. The interaction with SINAT1 or SINAT2, and the presence of TRAF1A/MUSE14 and TRAF1B/MUSE13, mediates its proteasome-dependent degradation. As to expression, highly expressed in mature pollen grains. Expressed in roots, leaves, stems, flowers and siliques.

Its subcellular location is the cytoplasm. It localises to the cytoskeleton. Required for normal plant development. Required for pollen germination. Required for autophagic activity. Required to limit the pathogen-associated cell death response. May be involved in vacuolar protein sorting. Binds to microtubules. May facilitate efficient recruitment of other ATG proteins to assemble scaffolds for autophagosome biogenesis. This Arabidopsis thaliana (Mouse-ear cress) protein is Beclin-1-like protein.